The sequence spans 241 residues: Small ribosomal subunit protein uS2 (241 aa).

This sequence belongs to the universal ribosomal protein uS2 family.

The polypeptide is Small ribosomal subunit protein uS2 (Citrobacter koseri (strain ATCC BAA-895 / CDC 4225-83 / SGSC4696)).